The chain runs to 154 residues: UPF0178 protein SSP2038 (154 aa).

It belongs to the UPF0178 family.

The sequence is that of UPF0178 protein SSP2038 from Staphylococcus saprophyticus subsp. saprophyticus (strain ATCC 15305 / DSM 20229 / NCIMB 8711 / NCTC 7292 / S-41).